The sequence spans 299 residues: MLSSKLLDINYWNKFGKRLINELINLIEQIPKGYVTTFKELAKALGDPIATKFVAMYYKKAPHWYRVVSSNLIVSPMQKALLEKEVKIIGNKVYAPIFKDFKSSKPLLELQKIQEYLVNKIKFDYPEYDYVIGIDIGYKNNIIALAIFDKNKKLIETKTCKHNIEFPYIPTYLSFREGIPIVNILKDLDYTALYIINGHGLSHPRKMGLATFVGTVLDLPTIGDAKKLLYGKIKNNIIYAHNMPVGYFVGHYVTIGNRTNLEFLKEFIKEWNSKKYLLPIEVADKITKCGRGDSNPGRD.

The probable methylated-DNA--protein-cysteine methyltransferase-like stretch occupies residues 1 to 80 (MLSSKLLDIN…NLIVSPMQKA (80 aa)). Residues 81 to 299 (LLEKEVKIIG…GRGDSNPGRD (219 aa)) form an endonuclease V region. Positions 135 and 197 each coordinate Mg(2+).

In the N-terminal section; belongs to the MGMT family. This sequence in the C-terminal section; belongs to the endonuclease V family. Mg(2+) serves as cofactor.

It localises to the cytoplasm. The catalysed reaction is Endonucleolytic cleavage at apurinic or apyrimidinic sites to products with a 5'-phosphate.. Its function is as follows. DNA repair enzyme involved in the repair of deaminated bases. Selectively cleaves double-stranded DNA at the second phosphodiester bond 3' to a deoxyinosine leaving behind the intact lesion on the nicked DNA. This chain is Bifunctional methyltransferase-like/endonuclease, found in Nanoarchaeum equitans (strain Kin4-M).